The primary structure comprises 508 residues: Bifunctional purine biosynthesis protein PurH (508 aa).

Positions 1–145 constitute an MGS-like domain; sequence MAKKALISVS…KNYKYVTILV (145 aa).

It belongs to the PurH family.

The catalysed reaction is (6R)-10-formyltetrahydrofolate + 5-amino-1-(5-phospho-beta-D-ribosyl)imidazole-4-carboxamide = 5-formamido-1-(5-phospho-D-ribosyl)imidazole-4-carboxamide + (6S)-5,6,7,8-tetrahydrofolate. It carries out the reaction IMP + H2O = 5-formamido-1-(5-phospho-D-ribosyl)imidazole-4-carboxamide. It functions in the pathway purine metabolism; IMP biosynthesis via de novo pathway; 5-formamido-1-(5-phospho-D-ribosyl)imidazole-4-carboxamide from 5-amino-1-(5-phospho-D-ribosyl)imidazole-4-carboxamide (10-formyl THF route): step 1/1. It participates in purine metabolism; IMP biosynthesis via de novo pathway; IMP from 5-formamido-1-(5-phospho-D-ribosyl)imidazole-4-carboxamide: step 1/1. This chain is Bifunctional purine biosynthesis protein PurH, found in Thermoanaerobacter sp. (strain X514).